The sequence spans 341 residues: Serpentine receptor class alpha-28 (341 aa).

7 consecutive transmembrane segments (helical) span residues 25–45, 57–77, 107–129, 142–162, 188–208, 242–262, and 275–295; these read FIIS…RVLL, LLFS…VIRL, YYYT…LFSF, ASIV…YWVF, VNNI…FLYI, IVIF…SVFI, and LIIS…LIIL.

This sequence belongs to the nematode receptor-like protein sra family.

Its subcellular location is the membrane. This chain is Serpentine receptor class alpha-28 (sra-28), found in Caenorhabditis elegans.